The chain runs to 288 residues: Shikimate dehydrogenase (NADP(+)) (288 aa).

Shikimate-binding positions include 18–20 and Thr65; that span reads SRS. The active-site Proton acceptor is Lys69. Glu81 serves as a coordination point for NADP(+). Shikimate is bound by residues Asn90 and Asp106. NADP(+)-binding positions include 131-135, 155-160, and Met223; these read GAGGA and NRTLAK. Tyr225 provides a ligand contact to shikimate. Gly246 is an NADP(+) binding site.

The protein belongs to the shikimate dehydrogenase family. Homodimer.

The enzyme catalyses shikimate + NADP(+) = 3-dehydroshikimate + NADPH + H(+). It participates in metabolic intermediate biosynthesis; chorismate biosynthesis; chorismate from D-erythrose 4-phosphate and phosphoenolpyruvate: step 4/7. Involved in the biosynthesis of the chorismate, which leads to the biosynthesis of aromatic amino acids. Catalyzes the reversible NADPH linked reduction of 3-dehydroshikimate (DHSA) to yield shikimate (SA). The polypeptide is Shikimate dehydrogenase (NADP(+)) (Verminephrobacter eiseniae (strain EF01-2)).